The primary structure comprises 174 residues: Small ribosomal subunit protein uS5 (174 aa).

Positions 18–81 (LKDRLVSVNR…EDAKKNLVKI (64 aa)) constitute an S5 DRBM domain.

It belongs to the universal ribosomal protein uS5 family. In terms of assembly, part of the 30S ribosomal subunit. Contacts proteins S4 and S8.

Functionally, with S4 and S12 plays an important role in translational accuracy. Its function is as follows. Located at the back of the 30S subunit body where it stabilizes the conformation of the head with respect to the body. In Flavobacterium psychrophilum (strain ATCC 49511 / DSM 21280 / CIP 103535 / JIP02/86), this protein is Small ribosomal subunit protein uS5.